The chain runs to 256 residues: MLRIADKTFQSRLFTGTGKFASSSLMLEAIRESGSEMATLAMKRVDLLRRDDALLAPLQASGVALLPNTSGAKTAEEAVFAAQLAREALGTHWIKLEIHPDARWLLPDPIETLRAAEKLVAQGFVVLPYCGADPVLCKRLEEAGCAAVMPLGAPIGSNQGLQTRALLEIIIAQASVPVVVDAGIGAPSHAAEALEMGADAVLVNTAIAVARDPVAMARAFRQAVEAGRTGFEAGLGARVFQAQATSPLTGFLEAQA.

The Schiff-base intermediate with DXP role is filled by Lys-95. 1-deoxy-D-xylulose 5-phosphate-binding positions include Gly-156, 182 to 183 (AG), and 204 to 205 (NT).

Belongs to the ThiG family. Homotetramer. Forms heterodimers with either ThiH or ThiS.

Its subcellular location is the cytoplasm. The enzyme catalyses [ThiS sulfur-carrier protein]-C-terminal-Gly-aminoethanethioate + 2-iminoacetate + 1-deoxy-D-xylulose 5-phosphate = [ThiS sulfur-carrier protein]-C-terminal Gly-Gly + 2-[(2R,5Z)-2-carboxy-4-methylthiazol-5(2H)-ylidene]ethyl phosphate + 2 H2O + H(+). The protein operates within cofactor biosynthesis; thiamine diphosphate biosynthesis. Its function is as follows. Catalyzes the rearrangement of 1-deoxy-D-xylulose 5-phosphate (DXP) to produce the thiazole phosphate moiety of thiamine. Sulfur is provided by the thiocarboxylate moiety of the carrier protein ThiS. In vitro, sulfur can be provided by H(2)S. This Cronobacter sakazakii (strain ATCC BAA-894) (Enterobacter sakazakii) protein is Thiazole synthase.